A 383-amino-acid chain; its full sequence is Izumo sperm-egg fusion protein 1 (383 aa).

An N-terminal signal peptide occupies residues 1-21 (MGLHFTLLLAALANCLCPARL). 5 disulfides stabilise this stretch: cysteine 22-cysteine 149, cysteine 25-cysteine 152, cysteine 135-cysteine 159, cysteine 139-cysteine 165, and cysteine 182-cysteine 233. At 22–306 (CIICDPFVVA…HRPEKKLKSR (285 aa)) the chain is on the extracellular side. The segment at 148–160 (WCNKCEKQMHFCR) is important for interaction with IZUMO1R. Residues 167–251 (ERQIEVHRLE…PATIIYYHVT (85 aa)) enclose the Ig-like C2-type domain. Asparagine 204 carries N-linked (GlcNAc...) asparagine glycosylation. The chain crosses the membrane as a helical span at residues 307 to 327 (LLILLILGFVVLVASVIASVL). The Cytoplasmic segment spans residues 328 to 383 (HFRKTRVKSKNSNVENKTSAAEFKSEAESPQKMGSRKLSQAEFHTDSSDKVEEADN). The interval 335–383 (KSKNSNVENKTSAAEFKSEAESPQKMGSRKLSQAEFHTDSSDKVEEADN) is disordered. The segment covering 337-346 (KNSNVENKTS) has biased composition (polar residues). Phosphoserine is present on residues serine 339, serine 346, and serine 366. Over residues 370-383 (FHTDSSDKVEEADN) the composition is skewed to basic and acidic residues. Threonine 372 carries the post-translational modification Phosphothreonine.

This sequence belongs to the Izumo family. As to quaternary structure, monomer, homodimer; disulfide-linked and homooligomer; depending on the context. Interacts with IZUMO1R/JUNO. IZUMO1 and IZUMO1R/JUNO form a complex with 1:1 stoichiometry. In gamete recognition, IZUMO1R/JUNO first binds to monomeric IZUMO1. The weak, but specific interaction with IZUMO1R/JUNO induces IZUMO1 homodimerization. The process follows a tight binding phase where IZUMO1 bends the entire structure towards the sperm membrane side through a thiol-disulfide exchange reaction. The molecule no longer binds to IZUMO1R/JUNO and instead binds to a putative second oocyte receptor. Interacts with ACE3. Part of a oolemmal binding multimeric complex (IZUMO1 complex) composed at least of IZUMO1 and GLIPR1L1; the complex assemblage is influenced by the maturation status of the male germ cell. Interacts with GLIPR1L1. Interacts with FREY; the interaction retains IZUMO1 at the endoplasmic reticulum membrane and coordinates IZUMO1 complex assembly. Interacts with WDR54. Forms a complex with SPACA6 and TMEM81 on spermatocyte cell membrane. N-glycosylated. Glycosylation is not essential for fusion and for proper protein trafficking in sperm. Post-translationally, phosphorylated. The cytoplasmic C-terminus is phosphorylated and undergoes phosphorylation changes during epididymal transit. As to expression, expressed in sperm (at protein level).

It is found in the cell membrane. Its subcellular location is the cytoplasmic vesicle. The protein localises to the secretory vesicle. It localises to the acrosome membrane. Its function is as follows. Essential sperm cell-surface protein required for fertilization by acting as a ligand for IZUMO1R/JUNO receptor on egg. The IZUMO1:IZUMO1R/JUNO interaction is a necessary adhesion event between sperm and egg that is required for fertilization but is not sufficient for cell fusion. The ligand-receptor interaction probably does not act as a membrane 'fusogen'. Plays a critical role in sperm-oolemma binding prior to plasma membrane fusion. Can mediate cell-cell fusion in cultured mammalian cells independently of its binding to IZUMO1R/JUNO. The protein is Izumo sperm-egg fusion protein 1 of Rattus norvegicus (Rat).